A 493-amino-acid chain; its full sequence is Amidophosphoribosyltransferase (493 aa).

A propeptide spanning residues M1–A26 is cleaved from the precursor. The Nucleophile role is filled by C27. The 226-residue stretch at C27 to A252 folds into the Glutamine amidotransferase type-2 domain. C268 is a binding site for [4Fe-4S] cluster. Mg(2+) is bound by residues S315, D377, and D378. Positions 414, 465, and 468 each coordinate [4Fe-4S] cluster.

This sequence in the C-terminal section; belongs to the purine/pyrimidine phosphoribosyltransferase family. It depends on Mg(2+) as a cofactor. The cofactor is [4Fe-4S] cluster.

It catalyses the reaction 5-phospho-beta-D-ribosylamine + L-glutamate + diphosphate = 5-phospho-alpha-D-ribose 1-diphosphate + L-glutamine + H2O. It functions in the pathway purine metabolism; IMP biosynthesis via de novo pathway; N(1)-(5-phospho-D-ribosyl)glycinamide from 5-phospho-alpha-D-ribose 1-diphosphate: step 1/2. Its function is as follows. Catalyzes the formation of phosphoribosylamine from phosphoribosylpyrophosphate (PRPP) and glutamine. This Synechococcus elongatus (strain ATCC 33912 / PCC 7942 / FACHB-805) (Anacystis nidulans R2) protein is Amidophosphoribosyltransferase.